A 353-amino-acid polypeptide reads, in one-letter code: Putative ABC transporter ATP-binding protein MG303 homolog (353 aa).

Residues 72-312 (LYFYNLSVFV…MQLLQRYEIT (241 aa)) form the ABC transporter domain. Residue 107–114 (GPSGSGKT) participates in ATP binding.

The protein belongs to the ABC transporter superfamily.

In Mycoplasma pneumoniae (strain ATCC 29342 / M129 / Subtype 1) (Mycoplasmoides pneumoniae), this protein is Putative ABC transporter ATP-binding protein MG303 homolog.